Here is a 457-residue protein sequence, read N- to C-terminus: Siroheme synthase (457 aa).

The segment at 1-204 (MDHLPIFCQL…NDQKAITETT (204 aa)) is precorrin-2 dehydrogenase /sirohydrochlorin ferrochelatase. Residues 22 to 23 (DV) and 43 to 44 (LA) each bind NAD(+). The residue at position 128 (S128) is a Phosphoserine. The uroporphyrinogen-III C-methyltransferase stretch occupies residues 216-457 (GEVVLVGAGP…RDKLNWFSNH (242 aa)). P225 is an S-adenosyl-L-methionine binding site. Residue D248 is the Proton acceptor of the active site. K270 (proton donor) is an active-site residue. S-adenosyl-L-methionine is bound by residues 301-303 (GGD), I306, 331-332 (TA), M382, and G411.

In the N-terminal section; belongs to the precorrin-2 dehydrogenase / sirohydrochlorin ferrochelatase family. The protein in the C-terminal section; belongs to the precorrin methyltransferase family.

The enzyme catalyses uroporphyrinogen III + 2 S-adenosyl-L-methionine = precorrin-2 + 2 S-adenosyl-L-homocysteine + H(+). It catalyses the reaction precorrin-2 + NAD(+) = sirohydrochlorin + NADH + 2 H(+). It carries out the reaction siroheme + 2 H(+) = sirohydrochlorin + Fe(2+). The protein operates within cofactor biosynthesis; adenosylcobalamin biosynthesis; precorrin-2 from uroporphyrinogen III: step 1/1. Its pathway is cofactor biosynthesis; adenosylcobalamin biosynthesis; sirohydrochlorin from precorrin-2: step 1/1. It functions in the pathway porphyrin-containing compound metabolism; siroheme biosynthesis; precorrin-2 from uroporphyrinogen III: step 1/1. It participates in porphyrin-containing compound metabolism; siroheme biosynthesis; siroheme from sirohydrochlorin: step 1/1. The protein operates within porphyrin-containing compound metabolism; siroheme biosynthesis; sirohydrochlorin from precorrin-2: step 1/1. Functionally, multifunctional enzyme that catalyzes the SAM-dependent methylations of uroporphyrinogen III at position C-2 and C-7 to form precorrin-2 via precorrin-1. Then it catalyzes the NAD-dependent ring dehydrogenation of precorrin-2 to yield sirohydrochlorin. Finally, it catalyzes the ferrochelation of sirohydrochlorin to yield siroheme. In Escherichia coli O8 (strain IAI1), this protein is Siroheme synthase.